Consider the following 526-residue polypeptide: Tyrosine-protein kinase transforming protein Src (526 aa).

Residues 1–52 (MGSSKSKPKDPSQRRRSLEPPDSTHHGGFPASQTPDETAAPDAHRNPSRSFG) form a disordered region. The N-myristoyl glycine; by host moiety is linked to residue Gly-2. Basic and acidic residues predominate over residues 7–25 (KPKDPSQRRRSLEPPDSTH). One can recognise an SH3 domain in the interval 81–142 (GGVTTFVALY…PSNYVAPSDS (62 aa)). Residues 148–245 (WYFGKITRRE…GLCHRLTNVC (98 aa)) form the SH2 domain. In terms of domain architecture, Protein kinase spans 267-517 (LRLEAKLGQG…TFKYLQAQLL (251 aa)). ATP-binding positions include 273–281 (LGQGCFGEV) and Lys-295. The active-site Proton acceptor is the Asp-386. Tyr-416 carries the post-translational modification Phosphotyrosine; by autocatalysis.

The protein belongs to the protein kinase superfamily. Tyr protein kinase family. SRC subfamily. The cofactor is Mn(2+). Post-translationally, the phosphorylated form is termed pp60v-src.

It carries out the reaction L-tyrosyl-[protein] + ATP = O-phospho-L-tyrosyl-[protein] + ADP + H(+). Functionally, this phosphoprotein, required for both the initiation and the maintenance of neoplastic transformation, is a protein kinase that catalyzes the phosphorylation of tyrosine residues in vitro. This chain is Tyrosine-protein kinase transforming protein Src (V-SRC), found in Gallus gallus (Chicken).